A 163-amino-acid polypeptide reads, in one-letter code: NADH-quinone oxidoreductase subunit I (163 aa).

4Fe-4S ferredoxin-type domains lie at 54–84 and 94–123; these read LRRYPNGEERCIACKLCEAVCPALAITIESD and TRYDIDLTKCIFCGFCEEACPVDAIVETQI. The [4Fe-4S] cluster site is built by cysteine 64, cysteine 67, cysteine 70, cysteine 74, cysteine 103, cysteine 106, cysteine 109, and cysteine 113.

The protein belongs to the complex I 23 kDa subunit family. In terms of assembly, NDH-1 is composed of 14 different subunits. Subunits NuoA, H, J, K, L, M, N constitute the membrane sector of the complex. The cofactor is [4Fe-4S] cluster.

It is found in the cell inner membrane. It catalyses the reaction a quinone + NADH + 5 H(+)(in) = a quinol + NAD(+) + 4 H(+)(out). Functionally, NDH-1 shuttles electrons from NADH, via FMN and iron-sulfur (Fe-S) centers, to quinones in the respiratory chain. The immediate electron acceptor for the enzyme in this species is believed to be ubiquinone. Couples the redox reaction to proton translocation (for every two electrons transferred, four hydrogen ions are translocated across the cytoplasmic membrane), and thus conserves the redox energy in a proton gradient. This chain is NADH-quinone oxidoreductase subunit I, found in Cupriavidus necator (strain ATCC 17699 / DSM 428 / KCTC 22496 / NCIMB 10442 / H16 / Stanier 337) (Ralstonia eutropha).